The chain runs to 103 residues: Small ribosomal subunit protein uS10 (103 aa).

This sequence belongs to the universal ribosomal protein uS10 family. Part of the 30S ribosomal subunit.

Its function is as follows. Involved in the binding of tRNA to the ribosomes. In Polynucleobacter asymbioticus (strain DSM 18221 / CIP 109841 / QLW-P1DMWA-1) (Polynucleobacter necessarius subsp. asymbioticus), this protein is Small ribosomal subunit protein uS10.